A 582-amino-acid chain; its full sequence is Calcium-dependent protein kinase 24 (582 aa).

The disordered stretch occupies residues methionine 1–aspartate 36. Glycine 2 is lipidated: N-myristoyl glycine. In terms of domain architecture, Protein kinase spans tyrosine 66–isoleucine 324. ATP-binding positions include leucine 72–threonine 80 and lysine 95. Aspartate 190 acts as the Proton acceptor in catalysis. The residue at position 230 (serine 230) is a Phosphoserine. The tract at residues alanine 330–valine 360 is autoinhibitory domain. 4 EF-hand domains span residues glutamate 367–valine 402, valine 403–methionine 438, glycine 439–glycine 474, and glycine 478–tryptophan 513. Aspartate 380, aspartate 382, asparagine 384, histidine 386, glutamate 391, aspartate 416, aspartate 418, asparagine 420, methionine 422, glutamate 427, aspartate 452, asparagine 454, asparagine 456, glutamate 463, aspartate 491, asparagine 493, aspartate 495, and arginine 497 together coordinate Ca(2+). Serine 499 is modified (phosphoserine). Glutamate 502 provides a ligand contact to Ca(2+).

The protein belongs to the protein kinase superfamily. Ser/Thr protein kinase family. CDPK subfamily.

The protein localises to the membrane. It catalyses the reaction L-seryl-[protein] + ATP = O-phospho-L-seryl-[protein] + ADP + H(+). The enzyme catalyses L-threonyl-[protein] + ATP = O-phospho-L-threonyl-[protein] + ADP + H(+). With respect to regulation, activated by calcium. Autophosphorylation may play an important role in the regulation of the kinase activity. In terms of biological role, may play a role in signal transduction pathways that involve calcium as a second messenger. This Arabidopsis thaliana (Mouse-ear cress) protein is Calcium-dependent protein kinase 24 (CPK24).